A 404-amino-acid polypeptide reads, in one-letter code: L-cysteine:1D-myo-inositol 2-amino-2-deoxy-alpha-D-glucopyranoside ligase (404 aa).

Cysteine 47 provides a ligand contact to Zn(2+). Residues cysteine 47 to threonine 50, threonine 62, and asparagine 85 to threonine 87 contribute to the L-cysteinyl-5'-AMP site. Residues isoleucine 49–histidine 59 carry the 'HIGH' region motif. A 'ERGGDP' region motif is present at residues glutamate 188–proline 193. An L-cysteinyl-5'-AMP-binding site is contributed by tryptophan 228. Position 232 (cysteine 232) interacts with Zn(2+). Glycine 250 to aspartate 252 is an L-cysteinyl-5'-AMP binding site. Residue histidine 257 participates in Zn(2+) binding. Isoleucine 284 contributes to the L-cysteinyl-5'-AMP binding site. The short motif at lysine 290 to serine 294 is the 'KMSKS' region element.

Belongs to the class-I aminoacyl-tRNA synthetase family. MshC subfamily. As to quaternary structure, monomer. The cofactor is Zn(2+).

It carries out the reaction 1D-myo-inositol 2-amino-2-deoxy-alpha-D-glucopyranoside + L-cysteine + ATP = 1D-myo-inositol 2-(L-cysteinylamino)-2-deoxy-alpha-D-glucopyranoside + AMP + diphosphate + H(+). In terms of biological role, catalyzes the ATP-dependent condensation of GlcN-Ins and L-cysteine to form L-Cys-GlcN-Ins. This is L-cysteine:1D-myo-inositol 2-amino-2-deoxy-alpha-D-glucopyranoside ligase from Corynebacterium striatum.